Reading from the N-terminus, the 231-residue chain is Chromosome partition protein MukE (231 aa).

A disordered region spans residues 197-231 (RDGEAMPIEGGLSLDDSENDETSDNSAEGTGDEQP).

This sequence belongs to the MukE family. As to quaternary structure, interacts, and probably forms a ternary complex, with MukF and MukB. The complex formation is stimulated by calcium or magnesium.

The protein resides in the cytoplasm. Its subcellular location is the nucleoid. Involved in chromosome condensation, segregation and cell cycle progression. May participate in facilitating chromosome segregation by condensation DNA from both sides of a centrally located replisome during cell division. Probably acts via its interaction with MukB and MukF. This is Chromosome partition protein MukE from Photorhabdus laumondii subsp. laumondii (strain DSM 15139 / CIP 105565 / TT01) (Photorhabdus luminescens subsp. laumondii).